We begin with the raw amino-acid sequence, 446 residues long: MHGHSRNGQAHVPRRKRRNRFVKKNGQCNVYFANLSNKSQRYMADIFTTCVDTRWRYMLMIFSAAFLVSWLFFGLLFWCIAFFHGDLEPSPSGPTAGGPGGNGGGAAPTAAKPCIMHVNGFLGAFLFSVETQTTIGYGFRCVTEECPLAVIAVVVQSIVGCVIDSFMIGTIMAKMPRPKKRAQTLLFSHHAVISVRDGKLCLMWRVGNLRKSHIVEAHVRAQLIKPYMTQEGEYLPLDQRDLNVGYDIGLDRIFLVSPIIIVHEIDEDSPLYGMGKEELESEDFEIVVILEGMVEATAMTTQARSSYLASEILWGHRFEPVVFEEKSHYKVDYSRFHKTYEVAGTPCCSARELQESKITVLPAPPPPPSAFCYENELALMSQEEEEMEEEAAAAAAVAAGLGLEAGSKEETGIIRMLEFGSHLDLERMQAATLPLDNISYRRESAI.

The Cytoplasmic portion of the chain corresponds to 1-55 (MHGHSRNGQAHVPRRKRRNRFVKKNGQCNVYFANLSNKSQRYMADIFTTCVDTRW). The helical transmembrane segment at 56–80 (RYMLMIFSAAFLVSWLFFGLLFWCI) threads the bilayer. Over 81 to 120 (AFFHGDLEPSPSGPTAGGPGGNGGGAAPTAAKPCIMHVNG) the chain is Extracellular. A val/Gly/Ala/Pro stretch region spans residues 91 to 111 (PSGPTAGGPGGNGGGAAPTAA). The helical; Pore-forming intramembrane region spans 121-132 (FLGAFLFSVETQ). The pore-forming intramembrane region spans 133 to 139 (TTIGYGF). A Selectivity filter motif is present at residues 134–139 (TIGYGF). Over 140–148 (RCVTEECPL) the chain is Extracellular. A helical transmembrane segment spans residues 149–170 (AVIAVVVQSIVGCVIDSFMIGT). The Cytoplasmic segment spans residues 171 to 446 (IMAKMPRPKK…NISYRRESAI (276 aa)). A PDZ-binding motif is present at residues 444–446 (SAI).

Belongs to the inward rectifier-type potassium channel (TC 1.A.2.1) family. KCNJ4 subfamily. Homomultimeric and heteromultimeric association with KCNJ2 and KCNJ12. Interacts with DLG2 and DLG4. Associates, via its PDZ-recognition domain, with a complex containing LIN7A, LIN7B, LIN7C, DLG1, CASK and APBA1. Interacts with TAX1BP3. TAX1BP3 competes with LIN7 family members for KCNJ4 binding. As to expression, detected in kidney distal convoluted tubules (at protein level). Widely expressed throughout the brain. Also found in some peripheral tissues.

It localises to the cell membrane. Its subcellular location is the cytoplasmic vesicle membrane. The protein localises to the postsynaptic cell membrane. The enzyme catalyses K(+)(in) = K(+)(out). Functionally, inward rectifier potassium channels are characterized by a greater tendency to allow potassium to flow into the cell rather than out of it. Their voltage dependence is regulated by the concentration of extracellular potassium; as external potassium is raised, the voltage range of the channel opening shifts to more positive voltages. The inward rectification is mainly due to the blockage of outward current by internal magnesium. Can be blocked by extracellular barium and cesium. The polypeptide is Inward rectifier potassium channel 4 (Kcnj4) (Rattus norvegicus (Rat)).